The sequence spans 460 residues: Protein unc-93 homolog A (460 aa).

The next 5 membrane-spanning stretches (helical) occupy residues 7 to 27 (ILIVSFGFLLLFTAFGGLQSL), 41 to 61 (SLSVIYAALIVSSVFVPPIVI), 68 to 88 (WTIVASMCCYITYSLGNFYAS), 89 to 109 (WYTLIPTSLILGFGGAPLWAA), and 139 to 159 (LFFLIFQSSGVWGNLISSLIF). Asn-168 and Asn-189 each carry an N-linked (GlcNAc...) asparagine glycan. Transmembrane regions (helical) follow at residues 203-223 (TLLGVYTGSGVLAVILIAVFL), 292-312 (FVGYVMICFAATNAVCSLLFG), 321-341 (ICLFILAAVSNAACVIALLLW), 345-365 (PNDFAVFFIFPAIWGMADAIW), 390-410 (LWESLGFVIAYGYSTFLCVSV), and 412-432 (LYILLAVLLIAIVFYGFVEYL).

Belongs to the unc-93 family.

The protein localises to the membrane. In Xenopus laevis (African clawed frog), this protein is Protein unc-93 homolog A (unc93a).